We begin with the raw amino-acid sequence, 462 residues long: A-type ATP synthase subunit B (462 aa).

The protein belongs to the ATPase alpha/beta chains family. As to quaternary structure, has multiple subunits with at least A(3), B(3), C, D, E, F, H, I and proteolipid K(x).

The protein localises to the cell membrane. Component of the A-type ATP synthase that produces ATP from ADP in the presence of a proton gradient across the membrane. The B chain is a regulatory subunit. The polypeptide is A-type ATP synthase subunit B (Methanococcus maripaludis (strain C7 / ATCC BAA-1331)).